The primary structure comprises 71 residues: Pro-MCH (71 aa).

An N-terminal signal peptide occupies residues 1 to 20; it reads AKMNLSSYILILTFSLFSQG.

Belongs to the melanin-concentrating hormone family.

The protein resides in the secreted. This Pan paniscus (Pygmy chimpanzee) protein is Pro-MCH (PMCH).